The chain runs to 282 residues: tRNA pseudouridine synthase B (282 aa).

The active-site Nucleophile is the Asp-39.

This sequence belongs to the pseudouridine synthase TruB family. Type 1 subfamily.

It catalyses the reaction uridine(55) in tRNA = pseudouridine(55) in tRNA. Functionally, responsible for synthesis of pseudouridine from uracil-55 in the psi GC loop of transfer RNAs. The protein is tRNA pseudouridine synthase B of Borreliella afzelii (strain PKo) (Borrelia afzelii).